A 355-amino-acid chain; its full sequence is Uroporphyrinogen decarboxylase (355 aa).

Residues 27–31 (RQAGR), Asp-78, Tyr-155, Thr-210, and His-328 each bind substrate.

This sequence belongs to the uroporphyrinogen decarboxylase family. As to quaternary structure, homodimer.

Its subcellular location is the cytoplasm. The catalysed reaction is uroporphyrinogen III + 4 H(+) = coproporphyrinogen III + 4 CO2. It functions in the pathway porphyrin-containing compound metabolism; protoporphyrin-IX biosynthesis; coproporphyrinogen-III from 5-aminolevulinate: step 4/4. Functionally, catalyzes the decarboxylation of four acetate groups of uroporphyrinogen-III to yield coproporphyrinogen-III. This Pseudomonas fluorescens (strain SBW25) protein is Uroporphyrinogen decarboxylase.